The chain runs to 216 residues: 3-keto-L-gulonate-6-phosphate decarboxylase UlaD (216 aa).

Aspartate 11 is a binding site for substrate. Mg(2+) contacts are provided by glutamate 33 and aspartate 62. Arginine 192 lines the substrate pocket.

It belongs to the HPS/KGPDC family. KGPDC subfamily. As to quaternary structure, homodimer. The cofactor is Mg(2+).

It carries out the reaction 3-dehydro-L-gulonate 6-phosphate + H(+) = L-xylulose 5-phosphate + CO2. The protein operates within cofactor degradation; L-ascorbate degradation; D-xylulose 5-phosphate from L-ascorbate: step 2/4. Its function is as follows. Catalyzes the decarboxylation of 3-keto-L-gulonate-6-P into L-xylulose-5-P. Is involved in the anaerobic L-ascorbate utilization. The sequence is that of 3-keto-L-gulonate-6-phosphate decarboxylase UlaD from Shigella boydii serotype 18 (strain CDC 3083-94 / BS512).